A 126-amino-acid chain; its full sequence is Phosphoribosyl-AMP cyclohydrolase (126 aa).

Residue aspartate 76 coordinates Mg(2+). Zn(2+) is bound at residue cysteine 77. Aspartate 78 and aspartate 80 together coordinate Mg(2+). Residues cysteine 94 and cysteine 101 each coordinate Zn(2+).

The protein belongs to the PRA-CH family. As to quaternary structure, homodimer. Requires Mg(2+) as cofactor. The cofactor is Zn(2+).

Its subcellular location is the cytoplasm. The enzyme catalyses 1-(5-phospho-beta-D-ribosyl)-5'-AMP + H2O = 1-(5-phospho-beta-D-ribosyl)-5-[(5-phospho-beta-D-ribosylamino)methylideneamino]imidazole-4-carboxamide. The protein operates within amino-acid biosynthesis; L-histidine biosynthesis; L-histidine from 5-phospho-alpha-D-ribose 1-diphosphate: step 3/9. Its function is as follows. Catalyzes the hydrolysis of the adenine ring of phosphoribosyl-AMP. This is Phosphoribosyl-AMP cyclohydrolase from Vesicomyosocius okutanii subsp. Calyptogena okutanii (strain HA).